The sequence spans 148 residues: Puroindoline-A (148 aa).

A signal peptide spans M1–A19. Residues Q20–Y28 constitute a propeptide that is removed on maturation. A propeptide spans Y147–W148 (removed in mature form).

Five disulfide bonds are present. As to expression, endosperm and aleurone layer of developing kernels. In the aleurone layer, mainly localized to starch granules and the surface of the plasma membrane, forming a uniform layer, also abundant in the intercellular space. In the endosperm, mainly localized to starch granules and the plasma membrane, but less abundant in the intercellular space. Not found in roots or coleoptiles.

It is found in the membrane. It localises to the secreted. Its subcellular location is the extracellular space. Functionally, acts as a membranotoxin, probably through its antibacterial and antifungal activities, contributing to the defense mechanism of the plant against predators. Forms monovalent cation-selective ion channels in membranes. Has antibacterial activity against the Gram-positive bacteria S.aureus and C.michiganensis, and the Gram-negative bacteria E.coli, P.syringae pv phaseoli, A.tumefaciens and E.carotovora subsp carotovora. Acts synergistically with PINB against bacteria. Contributes to grain texture and hardness. The protein is Puroindoline-A (PINA) of Triticum aestivum (Wheat).